The primary structure comprises 119 residues: Ribosome-binding factor A (119 aa).

The protein belongs to the RbfA family. As to quaternary structure, monomer. Binds 30S ribosomal subunits, but not 50S ribosomal subunits or 70S ribosomes.

It is found in the cytoplasm. Its function is as follows. One of several proteins that assist in the late maturation steps of the functional core of the 30S ribosomal subunit. Associates with free 30S ribosomal subunits (but not with 30S subunits that are part of 70S ribosomes or polysomes). Required for efficient processing of 16S rRNA. May interact with the 5'-terminal helix region of 16S rRNA. This chain is Ribosome-binding factor A, found in Pseudothermotoga lettingae (strain ATCC BAA-301 / DSM 14385 / NBRC 107922 / TMO) (Thermotoga lettingae).